We begin with the raw amino-acid sequence, 154 residues long: Large ribosomal subunit protein uL13 (154 aa).

It belongs to the universal ribosomal protein uL13 family. In terms of assembly, part of the 50S ribosomal subunit.

Functionally, this protein is one of the early assembly proteins of the 50S ribosomal subunit, although it is not seen to bind rRNA by itself. It is important during the early stages of 50S assembly. This chain is Large ribosomal subunit protein uL13, found in Rhodopseudomonas palustris (strain BisB18).